Here is a 158-residue protein sequence, read N- to C-terminus: Endoribonuclease YbeY (158 aa).

Zn(2+) is bound by residues H119, H123, and D129.

This sequence belongs to the endoribonuclease YbeY family. The cofactor is Zn(2+).

It localises to the cytoplasm. Functionally, single strand-specific metallo-endoribonuclease involved in late-stage 70S ribosome quality control and in maturation of the 3' terminus of the 16S rRNA. In Chlamydia abortus (strain DSM 27085 / S26/3) (Chlamydophila abortus), this protein is Endoribonuclease YbeY.